A 292-amino-acid polypeptide reads, in one-letter code: Phosphoribosylaminoimidazole-succinocarboxamide synthase (292 aa).

It belongs to the SAICAR synthetase family.

The catalysed reaction is 5-amino-1-(5-phospho-D-ribosyl)imidazole-4-carboxylate + L-aspartate + ATP = (2S)-2-[5-amino-1-(5-phospho-beta-D-ribosyl)imidazole-4-carboxamido]succinate + ADP + phosphate + 2 H(+). The protein operates within purine metabolism; IMP biosynthesis via de novo pathway; 5-amino-1-(5-phospho-D-ribosyl)imidazole-4-carboxamide from 5-amino-1-(5-phospho-D-ribosyl)imidazole-4-carboxylate: step 1/2. In Elusimicrobium minutum (strain Pei191), this protein is Phosphoribosylaminoimidazole-succinocarboxamide synthase.